The sequence spans 262 residues: Catechol O-methyltransferase domain-containing protein 1 (262 aa).

A helical; Signal-anchor for type II membrane protein transmembrane segment spans residues 12–32 (AALALGSAALGAAFATGLFLG). S-adenosyl-L-methionine is bound by residues D108, 110–111 (GT), S116, E134, V135, A163, D185, D187, and Y194.

The protein belongs to the class I-like SAM-binding methyltransferase superfamily. Cation-dependent O-methyltransferase family. As to quaternary structure, homodimer.

The protein localises to the membrane. Functionally, putative O-methyltransferase. In Homo sapiens (Human), this protein is Catechol O-methyltransferase domain-containing protein 1 (COMTD1).